Here is a 140-residue protein sequence, read N- to C-terminus: uncharacterized protein (140 aa).

This is an uncharacterized protein from Escherichia coli O157:H7.